A 197-amino-acid chain; its full sequence is Probable molybdenum cofactor guanylyltransferase (197 aa).

Residues 6–8 (LAG), Lys-18, Asp-65, and Asp-97 contribute to the GTP site. Residue Asp-97 participates in Mg(2+) binding.

The protein belongs to the MobA family. It depends on Mg(2+) as a cofactor.

Its subcellular location is the cytoplasm. It catalyses the reaction Mo-molybdopterin + GTP + H(+) = Mo-molybdopterin guanine dinucleotide + diphosphate. Transfers a GMP moiety from GTP to Mo-molybdopterin (Mo-MPT) cofactor (Moco or molybdenum cofactor) to form Mo-molybdopterin guanine dinucleotide (Mo-MGD) cofactor. This Staphylococcus carnosus (strain TM300) protein is Probable molybdenum cofactor guanylyltransferase.